The chain runs to 382 residues: Lipid-A-disaccharide synthase (382 aa).

This sequence belongs to the LpxB family.

The enzyme catalyses 2-N,3-O-bis[(3R)-3-hydroxytetradecanoyl]-alpha-D-glucosaminyl 1-phosphate + UDP-2-N,3-O-bis[(3R)-3-hydroxytetradecanoyl]-alpha-D-glucosamine = lipid A disaccharide (E. coli) + UDP + H(+). It carries out the reaction a lipid X + a UDP-2-N,3-O-bis[(3R)-3-hydroxyacyl]-alpha-D-glucosamine = a lipid A disaccharide + UDP + H(+). Its pathway is glycolipid biosynthesis; lipid IV(A) biosynthesis; lipid IV(A) from (3R)-3-hydroxytetradecanoyl-[acyl-carrier-protein] and UDP-N-acetyl-alpha-D-glucosamine: step 5/6. Condensation of UDP-2,3-diacylglucosamine and 2,3-diacylglucosamine-1-phosphate to form lipid A disaccharide, a precursor of lipid A, a phosphorylated glycolipid that anchors the lipopolysaccharide to the outer membrane of the cell. This Salmonella paratyphi A (strain AKU_12601) protein is Lipid-A-disaccharide synthase.